A 408-amino-acid polypeptide reads, in one-letter code: Ubiquitin-associated domain-containing protein 1 (408 aa).

In terms of domain architecture, Ubiquitin-like spans 14 to 98; it reads LRLQVCTMEG…LLLIKKRAPP (85 aa). Residues 100–119 are disordered; the sequence is LPKMADVSAEEKRKQEQKAP. Positions 108–119 are enriched in basic and acidic residues; sequence AEEKRKQEQKAP. Residues 185-231 enclose the UBA 1 domain; the sequence is DEDEEDRVDEIALRQLTEMGFPESRAVKALRLNHMSVTQAMEWLIEH. The disordered stretch occupies residues 235 to 275; the sequence is PAVDAPLPGQTPSEAAAEAGASSAEATAGPSSEAGGEEAKD. Over residues 245–268 the composition is skewed to low complexity; that stretch reads TPSEAAAEAGASSAEATAGPSSEA. In terms of domain architecture, UBA 2 spans 291-331; it reads RPDPRAVIALMEMGFDEKEVVDALRVNNNQQNAACEWLLGD. Residues 356 to 395 form the STI1 domain; the sequence is NPVVQLGLTNPKTLLAFEDMLENPLNSTQWMNDPETGPVM.

Component of the KPC complex.

The protein resides in the cytoplasm. Its pathway is protein modification; protein ubiquitination. Its function is as follows. Non-catalytic component of the KPC complex, a E3 ubiquitin-protein ligase complex that mediates polyubiquitination of target proteins, such as CDKN1B and NFKB1. Within the KPC complex, UBAC1 acts as an adapter that promotes the transfer of target proteins that have been polyubiquitinated by RNF123/KPC1 to the 26S proteasome. The protein is Ubiquitin-associated domain-containing protein 1 (UBAC1) of Gallus gallus (Chicken).